The primary structure comprises 548 residues: Chaperonin GroEL (548 aa).

Residues 30-33 (TLGP), lysine 51, 87-91 (DGTTT), glycine 415, 479-481 (NAA), and aspartate 495 each bind ATP.

This sequence belongs to the chaperonin (HSP60) family. In terms of assembly, forms a cylinder of 14 subunits composed of two heptameric rings stacked back-to-back. Interacts with the co-chaperonin GroES.

The protein resides in the cytoplasm. The catalysed reaction is ATP + H2O + a folded polypeptide = ADP + phosphate + an unfolded polypeptide.. Its function is as follows. Together with its co-chaperonin GroES, plays an essential role in assisting protein folding. The GroEL-GroES system forms a nano-cage that allows encapsulation of the non-native substrate proteins and provides a physical environment optimized to promote and accelerate protein folding. The sequence is that of Chaperonin GroEL from Lawsonia intracellularis (strain PHE/MN1-00).